A 453-amino-acid polypeptide reads, in one-letter code: Bifunctional protein GlmU (453 aa).

The interval 1–226 (MLDILILAAG…IQEVEGINNR (226 aa)) is pyrophosphorylase. UDP-N-acetyl-alpha-D-glucosamine-binding positions include 7 to 10 (LAAG), Lys21, Gln72, 77 to 78 (GT), 99 to 101 (YGD), Gly136, Glu151, Asn166, and Asn224. A Mg(2+)-binding site is contributed by Asp101. Mg(2+) is bound at residue Asn224. Residues 227–247 (QQQATLERYYQQQQARALMDA) form a linker region. The interval 248 to 453 (GVTLLDPARF…QGWERPTRKS (206 aa)) is N-acetyltransferase. Arg330 and Lys348 together coordinate UDP-N-acetyl-alpha-D-glucosamine. Residue His360 is the Proton acceptor of the active site. Positions 363 and 374 each coordinate UDP-N-acetyl-alpha-D-glucosamine. Acetyl-CoA-binding positions include Ala377, 383–384 (NY), Ser402, Ala420, and Arg437.

The protein in the N-terminal section; belongs to the N-acetylglucosamine-1-phosphate uridyltransferase family. It in the C-terminal section; belongs to the transferase hexapeptide repeat family. Homotrimer. The cofactor is Mg(2+).

The protein resides in the cytoplasm. It catalyses the reaction alpha-D-glucosamine 1-phosphate + acetyl-CoA = N-acetyl-alpha-D-glucosamine 1-phosphate + CoA + H(+). The catalysed reaction is N-acetyl-alpha-D-glucosamine 1-phosphate + UTP + H(+) = UDP-N-acetyl-alpha-D-glucosamine + diphosphate. It participates in nucleotide-sugar biosynthesis; UDP-N-acetyl-alpha-D-glucosamine biosynthesis; N-acetyl-alpha-D-glucosamine 1-phosphate from alpha-D-glucosamine 6-phosphate (route II): step 2/2. It functions in the pathway nucleotide-sugar biosynthesis; UDP-N-acetyl-alpha-D-glucosamine biosynthesis; UDP-N-acetyl-alpha-D-glucosamine from N-acetyl-alpha-D-glucosamine 1-phosphate: step 1/1. The protein operates within bacterial outer membrane biogenesis; LPS lipid A biosynthesis. Functionally, catalyzes the last two sequential reactions in the de novo biosynthetic pathway for UDP-N-acetylglucosamine (UDP-GlcNAc). The C-terminal domain catalyzes the transfer of acetyl group from acetyl coenzyme A to glucosamine-1-phosphate (GlcN-1-P) to produce N-acetylglucosamine-1-phosphate (GlcNAc-1-P), which is converted into UDP-GlcNAc by the transfer of uridine 5-monophosphate (from uridine 5-triphosphate), a reaction catalyzed by the N-terminal domain. This chain is Bifunctional protein GlmU, found in Cellvibrio japonicus (strain Ueda107) (Pseudomonas fluorescens subsp. cellulosa).